A 105-amino-acid polypeptide reads, in one-letter code: Small ribosomal subunit protein uS10 (105 aa).

Belongs to the universal ribosomal protein uS10 family. In terms of assembly, part of the 30S ribosomal subunit.

In terms of biological role, involved in the binding of tRNA to the ribosomes. The chain is Small ribosomal subunit protein uS10 from Rickettsia peacockii (strain Rustic).